We begin with the raw amino-acid sequence, 268 residues long: Tryptophan synthase alpha chain (268 aa).

Residues E49 and D60 each act as proton acceptor in the active site.

This sequence belongs to the TrpA family. As to quaternary structure, tetramer of two alpha and two beta chains.

It carries out the reaction (1S,2R)-1-C-(indol-3-yl)glycerol 3-phosphate + L-serine = D-glyceraldehyde 3-phosphate + L-tryptophan + H2O. Its pathway is amino-acid biosynthesis; L-tryptophan biosynthesis; L-tryptophan from chorismate: step 5/5. Its function is as follows. The alpha subunit is responsible for the aldol cleavage of indoleglycerol phosphate to indole and glyceraldehyde 3-phosphate. This chain is Tryptophan synthase alpha chain, found in Xylella fastidiosa (strain M23).